The sequence spans 89 residues: Small ribosomal subunit protein bS20 (89 aa).

Residues 1–12 are compositionally biased toward basic residues; that stretch reads MANIKSAKKRAK. The disordered stretch occupies residues 1-24; sequence MANIKSAKKRAKQTVVRNERNTGQ.

The protein belongs to the bacterial ribosomal protein bS20 family.

Its function is as follows. Binds directly to 16S ribosomal RNA. The polypeptide is Small ribosomal subunit protein bS20 (Xanthomonas campestris pv. campestris (strain 8004)).